We begin with the raw amino-acid sequence, 721 residues long: MLLPVFTLKLRHKISPRMVAIGRYDGTHPCLAAATQTGKVFIHNPHTRNQHVSASRVFQSPLESDVSLLSINQAVSCLTAGVLNPELGYDALLVGTQTNLLAYDVYNNSDLFYREVADGANAIVLGTLGDISSPLAIIGGNCALQGFNHEGSDLFWTVTGDNVNSLALCDFDGDGKKELLVGSEDFDIRVFKEDEIVAEMTETEIVTSLCPMYGSRFGYALSNGTVGVYDKTSRYWRIKSKNHAMSIHAFDLNSDGVNELITGWSNGKVDARSDRTGEVIFKDNFSSAIAGVVEGDYRMDGHIQLICCSVDGEIRGYLPGTAEMRGNLMDTSAEQDLIRELSQKKQNLLLELRNYEENAKAELASPLNEADGHRGIIPANTRLHTTLSVSLGNETQTAHTELRISTSNDTIIRAVLIFAEGIFTGESHVVHPSIHNLSSSICIPIVPPKDVPVDLHLKAFVGYRSSTQFHVFESTRQLPRFSMYALTSLDPASEPISYVNFTIAERAQRVVVWLGQNFLLPEDTHIQNAPFQVCFTSLRNGGHLHIKIKLSGEITINTDDIDLAGDIIQSMASFFAIEDLQVEADFPVYFEELRKVLVKVDEYHSVHQKLSADMADHSNLIRSLLVGAEDARLMRDMKTMKSRYMELYDLNRDLLNGYKIRCNNHTELLGNLKAVNQAIQRAGRLRVGKPKNQVITACRDAIRSNNINTLFKIMRVGTASS.

A coiled-coil region spans residues 325-369 (RGNLMDTSAEQDLIRELSQKKQNLLLELRNYEENAKAELASPLNE).

In terms of assembly, part of BBSome complex, that contains BBS1, BBS2, BBS4, BBS5, BBS7, BBS8/TTC8, BBS9 and BBIP10. Interacts (via C-terminus) with BBS7. Interacts (via coiled coil domain) with MKKS. Interacts with CCDC28B and ALDOB. Interacts with DLEC1. As to expression, widely expressed.

The protein resides in the cell projection. Its subcellular location is the cilium membrane. It is found in the cytoplasm. The protein localises to the cytoskeleton. It localises to the microtubule organizing center. The protein resides in the centrosome. Its subcellular location is the centriolar satellite. Its function is as follows. The BBSome complex is thought to function as a coat complex required for sorting of specific membrane proteins to the primary cilia. The BBSome complex is required for ciliogenesis but is dispensable for centriolar satellite function. This ciliogenic function is mediated in part by the Rab8 GDP/GTP exchange factor, which localizes to the basal body and contacts the BBSome. Rab8(GTP) enters the primary cilium and promotes extension of the ciliary membrane. Firstly the BBSome associates with the ciliary membrane and binds to RAB3IP/Rabin8, the guanosyl exchange factor (GEF) for Rab8 and then the Rab8-GTP localizes to the cilium and promotes docking and fusion of carrier vesicles to the base of the ciliary membrane. The BBSome complex, together with the LTZL1, controls SMO ciliary trafficking and contributes to the sonic hedgehog (SHH) pathway regulation. Required for proper BBSome complex assembly and its ciliary localization. This Homo sapiens (Human) protein is BBSome complex member BBS2.